Here is a 319-residue protein sequence, read N- to C-terminus: Mercury resistance probable Hg transport protein (319 aa).

The Hg(2+) site is built by Cys298, Cys299, Cys318, and Cys319.

The polypeptide is Mercury resistance probable Hg transport protein (Streptomyces lividans).